Here is a 400-residue protein sequence, read N- to C-terminus: Hyaluronan and proteoglycan link protein 4 (400 aa).

The N-terminal stretch at 1–30 (MACAPGALGHRALWAVAWGLLLLVPVLAGA) is a signal peptide. One can recognise an Ig-like C2-type domain in the interval 47–155 (SVVVQTAPGQ…VTNELEDDVG (109 aa)). 5 cysteine pairs are disulfide-bonded: C69/C144, C186/C264, C210/C231, C291/C361, and C316/C337. N-linked (GlcNAc...) asparagine glycosylation is present at N133. Link domains are found at residues 164 to 266 (VVFP…FCFT) and 271 to 363 (GRVF…YCYR).

It belongs to the HAPLN family. As to expression, expressed predominantly in brain where it is found mainly throughout the midbrain and hindbrain in a perineuronal net pattern.

The protein localises to the secreted. It is found in the extracellular space. Its subcellular location is the extracellular matrix. Functionally, essential for the proper localization of brevican (BCAN), mainly as a perineuronal nets (PNNs)-type deposition in the brainstem and cerebellum thereby playing a key role in the formation and structural organization of PNNs. Contributes to the formation and transmission of inhibitory GABAergic synapses between Purkinje cells and deep cerebellar nuclei neurons. This Mus musculus (Mouse) protein is Hyaluronan and proteoglycan link protein 4 (Hapln4).